We begin with the raw amino-acid sequence, 446 residues long: tRNA modification GTPase MnmE (446 aa).

Arginine 22, glutamate 80, and arginine 119 together coordinate (6S)-5-formyl-5,6,7,8-tetrahydrofolate. The region spanning 215 to 370 (GFKVAIIGKP…LILALENIMN (156 aa)) is the TrmE-type G domain. Asparagine 225 contacts K(+). Residues 225-230 (NVGKSS), 244-250 (SDIAGTT), and 269-272 (DTAG) each bind GTP. Serine 229 lines the Mg(2+) pocket. Positions 244, 246, and 249 each coordinate K(+). Threonine 250 lines the Mg(2+) pocket. Lysine 446 serves as a coordination point for (6S)-5-formyl-5,6,7,8-tetrahydrofolate.

This sequence belongs to the TRAFAC class TrmE-Era-EngA-EngB-Septin-like GTPase superfamily. TrmE GTPase family. In terms of assembly, homodimer. Heterotetramer of two MnmE and two MnmG subunits. Requires K(+) as cofactor.

It localises to the cytoplasm. In terms of biological role, exhibits a very high intrinsic GTPase hydrolysis rate. Involved in the addition of a carboxymethylaminomethyl (cmnm) group at the wobble position (U34) of certain tRNAs, forming tRNA-cmnm(5)s(2)U34. The sequence is that of tRNA modification GTPase MnmE from Sulfurimonas denitrificans (strain ATCC 33889 / DSM 1251) (Thiomicrospira denitrificans (strain ATCC 33889 / DSM 1251)).